Consider the following 259-residue polypeptide: Phospholipase YtpA (259 aa).

The active-site Nucleophile is the Ser88. Active-site charge relay system residues include Asp206 and His236.

It belongs to the AB hydrolase superfamily.

The protein operates within antibiotic biosynthesis; bacilysocin biosynthesis. Its function is as follows. Phospholipase involved in the biosynthesis of the antibiotic bacilysocin. It probably catalyzes the hydrolysis of the 2-sn-acyl moiety of phosphatidylglycerol to produce bacilysocin (lysophosphatidylglycerol). Is also able to catalyze the hydrolysis reaction of one acyl bond in phosphatidylcholine in vitro (actual cleavage point is unknown), resulting in lysophosphatidylcholine. This Bacillus subtilis (strain 168) protein is Phospholipase YtpA (ytpA).